Consider the following 349-residue polypeptide: Glycerol-3-phosphate dehydrogenase [NAD(+)], cytoplasmic (349 aa).

10 to 15 (GSGNWG) provides a ligand contact to NAD(+). Residue Lys120 coordinates substrate. Ala153 is a binding site for NAD(+). Ser154 carries the phosphoserine modification. The Proton acceptor role is filled by Lys204. Arg269 serves as a coordination point for NAD(+). Position 269-270 (269-270 (RN)) interacts with substrate. Lys289 carries the N6-succinyllysine modification. 2 residues coordinate NAD(+): Lys296 and Gln298. At Tyr326 the chain carries Phosphotyrosine.

The protein belongs to the NAD-dependent glycerol-3-phosphate dehydrogenase family. In terms of assembly, homodimer.

Its subcellular location is the cytoplasm. The catalysed reaction is sn-glycerol 3-phosphate + NAD(+) = dihydroxyacetone phosphate + NADH + H(+). Has glycerol-3-phosphate dehydrogenase activity. The sequence is that of Glycerol-3-phosphate dehydrogenase [NAD(+)], cytoplasmic from Rattus norvegicus (Rat).